The primary structure comprises 245 residues: DNA repair protein RecO (245 aa).

The protein belongs to the RecO family.

Its function is as follows. Involved in DNA repair and RecF pathway recombination. The protein is DNA repair protein RecO of Chromobacterium violaceum (strain ATCC 12472 / DSM 30191 / JCM 1249 / CCUG 213 / NBRC 12614 / NCIMB 9131 / NCTC 9757 / MK).